A 236-amino-acid polypeptide reads, in one-letter code: Pyridoxine 5'-phosphate synthase (236 aa).

Asn-6 contributes to the 3-amino-2-oxopropyl phosphate binding site. 8–9 (DH) is a 1-deoxy-D-xylulose 5-phosphate binding site. Arg-17 contributes to the 3-amino-2-oxopropyl phosphate binding site. His-42 (proton acceptor) is an active-site residue. 1-deoxy-D-xylulose 5-phosphate is bound by residues Arg-44 and His-49. Catalysis depends on Glu-69, which acts as the Proton acceptor. Thr-99 contacts 1-deoxy-D-xylulose 5-phosphate. His-190 serves as the catalytic Proton donor. 3-amino-2-oxopropyl phosphate is bound by residues Gly-191 and 212–213 (GH).

This sequence belongs to the PNP synthase family. In terms of assembly, homooctamer; tetramer of dimers.

The protein localises to the cytoplasm. It catalyses the reaction 3-amino-2-oxopropyl phosphate + 1-deoxy-D-xylulose 5-phosphate = pyridoxine 5'-phosphate + phosphate + 2 H2O + H(+). The protein operates within cofactor biosynthesis; pyridoxine 5'-phosphate biosynthesis; pyridoxine 5'-phosphate from D-erythrose 4-phosphate: step 5/5. Functionally, catalyzes the complicated ring closure reaction between the two acyclic compounds 1-deoxy-D-xylulose-5-phosphate (DXP) and 3-amino-2-oxopropyl phosphate (1-amino-acetone-3-phosphate or AAP) to form pyridoxine 5'-phosphate (PNP) and inorganic phosphate. This chain is Pyridoxine 5'-phosphate synthase, found in Chlorobium phaeobacteroides (strain DSM 266 / SMG 266 / 2430).